A 1673-amino-acid chain; its full sequence is MNFQYLVKIVAGSYYNISSSILSKIINSVIMAGLYYGFLTALALKTSYILLIHAMVRENPNHKAAAITGLILGQLGQLLSIYYAPLYIAFGRPYTLTVLTLIYFLVNLFGNNLDKNASSFGAYGNTIRNLEILCIFLNNLILQLLNTCIFPSSTLARVVNVYLFRCNNKMVFLISSFSAWLIGQILVLMCCQLVLGRGQNKNSIRSLIQKYLVRNSMFFLVVNCLFGSSLFILTIQSLGRIPLPIPTQKLSEISRIEKREEERLKKSGVAKEGKSTEDEEDLSHEKDSLKKEPYSKLENEDEEIEKDIEQAIGTLLFDYKRWTRPFRYIKNNQFEQAVRNEMSQYFFATQQSDGKSRICFTYPVNLSMFWKGISFLSRDKNYSNKLNRHWVERNKKKLKSLKRDLVNRIKNLDKTLKIEFGTTRTRLCTCIHDDETKQEYVPEEYDPLLAGGYRGRIKKEQAILQKQENETLTHPLDTLIDVLENNTNAQLFKTNPIDNQKINFEEELRKKVPRWSYKLITELEQISYYRNPPDDHDIRTRKAKSLVVFDPSKHPNMETMEDNGNIQNNSSDKTINPQNNLTNLKPRTSENDPDDNTTEKEPKDDKSYSIRYSHQSDFRHGLIKDSMRSLRRKIVIKDLFKGNVHSPLFFERRKKKNLFSFSGLVKLKKLFIPGSAQKEFGDLKDSNKKLTIKDKKQQETKERIEIAEAWDSFELTQVLRGVLLVTQSSLRRDILLPSLIIIKNLGRILLFQSSELSDDFKELAKETHVPCTYNGVPLGEKEFPRNWLTEGIQIKILSPFCLKPWNEEKKPLPASENFCFLTIWGQETDQIFGRPRRRPSFFKPFLTKLDTTLKKINLFQFFKEKRTPESNMVKEQKVDDLSDNILNEFQFSKREKLEAITNRTSIIKTKLETIAEEKKKVTRDLDRSLSKKSLKRIRFKLVSNLFPFQSFLKLFIQEIYNLFLRNILLISGLLKKILNREKEKLINQSCSKNEKMKKVHKKFNFSLNRKSKPSTNFSNLSQAYVFYKISQQIASFSVCKLRSILNQQVKAIFVKPEIKEFFARHGLIQTQEMDKKSIQLRTPQWKHWLRVNSQHHLSQILWFSFGAKKENWRKKINRCNKQSLQKRNSSGNSNLDDSKNRNTDNLILNKNQKDNFEKCYRYDVLSSKFIKFEKKKISFIHRSPLSLTRQHQISYHKNMSQNFLFALPKNMSVKNLMGKSQRMHIPYIEKDFDRKYLSFENIEFSLKKKINIESWIPLTSRGNKTKTYNYEFLDELELMEFIDQIYKKEKELLFPCIERNNKIRNAKSKYSFIDWMGLNEELLKHPVTNLELWFFPEFVSLLNIYKLKPWVLQSQLLFSKLTFNKLLSKQQNQTTTKMNTETKNKQKSKVENEKNKKTENQQNAETKNKQKSKTENEGNKETENQQNDESEDDPQLAYIRSFMKKHLLFQLRGESIFKKSGFKNIQILCLLLRLMNQNEMLFSSIQRQKLNLHIMPEIGIKELTLEVLEEIGVPEFLKEKRVNFEPFPLYINKNGKFLMYQLLNMSLVHNIKYPTNNESRNQGVITTQKNNNMASHIPENILSSRRRRELRILMCLNHNKKKCESTEATNKSFIYKKKCAKIWEEQKSTIEFFIWPNSRFEDLTCMNRYWFYTNNGSRFSMLRIFMYLPLKNY.

Transmembrane regions (helical) follow at residues 32-52 (AGLY…ILLI), 70-90 (LILG…YIAF), 93-113 (PYTL…GNNL), 130-150 (LEIL…TCIF), 170-190 (MVFL…VLMC), and 218-238 (FFLV…IQSL). Basic and acidic residues-rich tracts occupy residues 264-276 (LKKS…GKST) and 283-298 (SHEK…SKLE). Disordered regions lie at residues 264–302 (LKKS…NEDE), 547–611 (VVFD…YSIR), 1120–1146 (NKQS…TDNL), and 1370–1433 (QQNQ…SEDD). Over residues 562–586 (DNGNIQNNSSDKTINPQNNLTNLKP) the composition is skewed to polar residues. Residues 597–611 (TTEKEPKDDKSYSIR) show a composition bias toward basic and acidic residues. Residues 1120 to 1135 (NKQSLQKRNSSGNSNL) are compositionally biased toward polar residues. A compositionally biased stretch (low complexity) spans 1370–1379 (QQNQTTTKMN). 2 stretches are compositionally biased toward basic and acidic residues: residues 1380–1399 (TETK…KKTE) and 1406–1423 (TKNK…KETE).

Belongs to the TIC214 family. As to quaternary structure, part of the Tic complex.

The protein resides in the plastid. The protein localises to the chloroplast inner membrane. Functionally, involved in protein precursor import into chloroplasts. May be part of an intermediate translocation complex acting as a protein-conducting channel at the inner envelope. The protein is Protein TIC 214 of Cuscuta gronovii (Common dodder).